Here is a 966-residue protein sequence, read N- to C-terminus: Leucine--tRNA ligase (966 aa).

The 'HIGH' region motif lies at 71-82 (PYPSGAGLHVGH). The tract at residues 561-580 (YSPRTFDPDDADTKPETPLS) is disordered. Residues 571–580 (ADTKPETPLS) show a composition bias toward basic and acidic residues. The short motif at 734-738 (KMGKS) is the 'KMSKS' region element. K737 serves as a coordination point for ATP.

It belongs to the class-I aminoacyl-tRNA synthetase family.

It is found in the cytoplasm. The catalysed reaction is tRNA(Leu) + L-leucine + ATP = L-leucyl-tRNA(Leu) + AMP + diphosphate. This is Leucine--tRNA ligase from Streptomyces coelicolor (strain ATCC BAA-471 / A3(2) / M145).